The primary structure comprises 466 residues: Dihydrolipoyl dehydrogenase 3 (466 aa).

Residues 33–42, Lys-51, and Gly-115 contribute to the FAD site; that span reads EGRSTLGGTC. Cysteines 42 and 47 form a disulfide. NAD(+) contacts are provided by residues 181–185, Glu-204, Val-238, and 271–274; these read GAGVI and AIGR. Positions 313 and 321 each coordinate FAD. His-445 acts as the Proton acceptor in catalysis.

This sequence belongs to the class-I pyridine nucleotide-disulfide oxidoreductase family. Homodimer. The cofactor is FAD.

It localises to the cytoplasm. The catalysed reaction is N(6)-[(R)-dihydrolipoyl]-L-lysyl-[protein] + NAD(+) = N(6)-[(R)-lipoyl]-L-lysyl-[protein] + NADH + H(+). Functionally, LPD-3 may substitute for lipoamide dehydrogenase of the 2-oxoglutarate dehydrogenase and pyruvate multienzyme complexes when the latter is inactive or missing. This is Dihydrolipoyl dehydrogenase 3 (lpd3) from Pseudomonas putida (Arthrobacter siderocapsulatus).